The sequence spans 79 residues: MAKAPVRKPKKKVCVFCKDKAAQSIDYKDTTLLRKYISDRGKIRARRVTGNCSQHQRDVAIAVKNAREMALLPYTSTAR.

Belongs to the bacterial ribosomal protein bS18 family. Part of the 30S ribosomal subunit. Forms a tight heterodimer with protein bS6.

Functionally, binds as a heterodimer with protein bS6 to the central domain of the 16S rRNA, where it helps stabilize the platform of the 30S subunit. This Saccharopolyspora erythraea (strain ATCC 11635 / DSM 40517 / JCM 4748 / NBRC 13426 / NCIMB 8594 / NRRL 2338) protein is Small ribosomal subunit protein bS18B.